A 62-amino-acid polypeptide reads, in one-letter code: DNA-directed RNA polymerase subunit Rpo10 (62 aa).

Cys6, Cys9, Cys43, and Cys44 together coordinate Zn(2+).

This sequence belongs to the archaeal Rpo10/eukaryotic RPB10 RNA polymerase subunit family. As to quaternary structure, part of the RNA polymerase complex. It depends on Zn(2+) as a cofactor.

The protein resides in the cytoplasm. It carries out the reaction RNA(n) + a ribonucleoside 5'-triphosphate = RNA(n+1) + diphosphate. DNA-dependent RNA polymerase (RNAP) catalyzes the transcription of DNA into RNA using the four ribonucleoside triphosphates as substrates. The polypeptide is DNA-directed RNA polymerase subunit Rpo10 (Methanosphaerula palustris (strain ATCC BAA-1556 / DSM 19958 / E1-9c)).